A 161-amino-acid polypeptide reads, in one-letter code: Small ribosomal subunit protein uS19 (161 aa).

Over residues 1–19 the composition is skewed to basic residues; it reads MARQKKYSGKGGARKKNKQ. The interval 1–26 is disordered; sequence MARQKKYSGKGGARKKNKQKQNVAPR.

This sequence belongs to the universal ribosomal protein uS19 family.

Functionally, protein S19 forms a complex with S13 that binds strongly to the 16S ribosomal RNA. The polypeptide is Small ribosomal subunit protein uS19 (Methanococcus maripaludis (strain C5 / ATCC BAA-1333)).